A 113-amino-acid chain; its full sequence is CRISPR-associated endoribonuclease Cas2 2 (113 aa).

Residue aspartate 32 coordinates Mg(2+).

Belongs to the CRISPR-associated endoribonuclease Cas2 protein family. As to quaternary structure, homodimer, forms a heterotetramer with a Cas1 homodimer. Mg(2+) serves as cofactor.

CRISPR (clustered regularly interspaced short palindromic repeat), is an adaptive immune system that provides protection against mobile genetic elements (viruses, transposable elements and conjugative plasmids). CRISPR clusters contain sequences complementary to antecedent mobile elements and target invading nucleic acids. CRISPR clusters are transcribed and processed into CRISPR RNA (crRNA). Functions as a ssRNA-specific endoribonuclease. Involved in the integration of spacer DNA into the CRISPR cassette. In Nitrosomonas europaea (strain ATCC 19718 / CIP 103999 / KCTC 2705 / NBRC 14298), this protein is CRISPR-associated endoribonuclease Cas2 2 (cas22).